Reading from the N-terminus, the 326-residue chain is Vitamin B12 import system permease protein BtuC (326 aa).

A run of 9 helical transmembrane segments spans residues 19–39 (LSVL…LWIL), 61–81 (LAVL…QALF), 88–108 (PGLL…VLLG), 112–132 (LPNW…TLIL), 146–166 (LLAG…AIYF), 184–204 (GGVD…LLWI), 240–260 (GWMV…GLVI), 274–294 (VLLP…DIVA), and 302–322 (ELPI…WLLL).

This sequence belongs to the binding-protein-dependent transport system permease family. FecCD subfamily. As to quaternary structure, the complex is composed of two ATP-binding proteins (BtuD), two transmembrane proteins (BtuC) and a solute-binding protein (BtuF).

The protein resides in the cell inner membrane. Its function is as follows. Part of the ABC transporter complex BtuCDF involved in vitamin B12 import. Involved in the translocation of the substrate across the membrane. In Escherichia coli O127:H6 (strain E2348/69 / EPEC), this protein is Vitamin B12 import system permease protein BtuC.